A 340-amino-acid chain; its full sequence is N-acetyl-gamma-glutamyl-phosphate reductase (340 aa).

Cys146 is an active-site residue.

The protein belongs to the NAGSA dehydrogenase family. Type 1 subfamily.

It is found in the cytoplasm. It carries out the reaction N-acetyl-L-glutamate 5-semialdehyde + phosphate + NADP(+) = N-acetyl-L-glutamyl 5-phosphate + NADPH + H(+). The protein operates within amino-acid biosynthesis; L-arginine biosynthesis; N(2)-acetyl-L-ornithine from L-glutamate: step 3/4. Functionally, catalyzes the NADPH-dependent reduction of N-acetyl-5-glutamyl phosphate to yield N-acetyl-L-glutamate 5-semialdehyde. This is N-acetyl-gamma-glutamyl-phosphate reductase from Streptococcus sanguinis (strain SK36).